The primary structure comprises 318 residues: Transaldolase (318 aa).

The active-site Schiff-base intermediate with substrate is lysine 131.

The protein belongs to the transaldolase family. Type 1 subfamily. As to quaternary structure, homodimer.

It is found in the cytoplasm. It catalyses the reaction D-sedoheptulose 7-phosphate + D-glyceraldehyde 3-phosphate = D-erythrose 4-phosphate + beta-D-fructose 6-phosphate. The protein operates within carbohydrate degradation; pentose phosphate pathway; D-glyceraldehyde 3-phosphate and beta-D-fructose 6-phosphate from D-ribose 5-phosphate and D-xylulose 5-phosphate (non-oxidative stage): step 2/3. In terms of biological role, transaldolase is important for the balance of metabolites in the pentose-phosphate pathway. The chain is Transaldolase from Buchnera aphidicola subsp. Cinara cedri (strain Cc).